A 261-amino-acid polypeptide reads, in one-letter code: MTHQTHAYHMVNPSPWPLTGALSALLMTSGLAMWFHFNSTLLLALGLLTNILTMYQWWRDIIRESTFQGHHTSIVQKGLRYGMILFIISEVFFFSGFFWAFYHSSLAPTPELGGCWPPTGIHPLNPLEVPLLNTSVLLASGVSITWAHHSLMEGNRKNMLQGLFITISLGVYFTLLQASEYYEASFTISDGVYGSTFFVATGFHGLHVIIGSTFLIVCFLRQLKFHFTSSHHFGFEAAAWYWHFVDVVWLFLYVSIYWWGS.

Residues 1 to 15 (MTHQTHAYHMVNPSP) are Mitochondrial matrix-facing. Residues 16–34 (WPLTGALSALLMTSGLAMW) form a helical membrane-spanning segment. Over 35-40 (FHFNST) the chain is Mitochondrial intermembrane. Residues 41 to 66 (LLLALGLLTNILTMYQWWRDIIREST) traverse the membrane as a helical segment. Residues 67 to 72 (FQGHHT) are Mitochondrial matrix-facing. A helical membrane pass occupies residues 73-105 (SIVQKGLRYGMILFIISEVFFFSGFFWAFYHSS). The Mitochondrial intermembrane segment spans residues 106 to 128 (LAPTPELGGCWPPTGIHPLNPLE). The chain crosses the membrane as a helical span at residues 129 to 152 (VPLLNTSVLLASGVSITWAHHSLM). The Mitochondrial matrix segment spans residues 153-155 (EGN). The helical transmembrane segment at 156–183 (RKNMLQGLFITISLGVYFTLLQASEYYE) threads the bilayer. The Mitochondrial intermembrane segment spans residues 184 to 190 (ASFTISD). Residues 191–223 (GVYGSTFFVATGFHGLHVIIGSTFLIVCFLRQL) form a helical membrane-spanning segment. Over 224-232 (KFHFTSSHH) the chain is Mitochondrial matrix. Residues 233–256 (FGFEAAAWYWHFVDVVWLFLYVSI) form a helical membrane-spanning segment. The Mitochondrial intermembrane segment spans residues 257–261 (YWWGS).

It belongs to the cytochrome c oxidase subunit 3 family. In terms of assembly, component of the cytochrome c oxidase (complex IV, CIV), a multisubunit enzyme composed of 14 subunits. The complex is composed of a catalytic core of 3 subunits MT-CO1, MT-CO2 and MT-CO3, encoded in the mitochondrial DNA, and 11 supernumerary subunits COX4I, COX5A, COX5B, COX6A, COX6B, COX6C, COX7A, COX7B, COX7C, COX8 and NDUFA4, which are encoded in the nuclear genome. The complex exists as a monomer or a dimer and forms supercomplexes (SCs) in the inner mitochondrial membrane with NADH-ubiquinone oxidoreductase (complex I, CI) and ubiquinol-cytochrome c oxidoreductase (cytochrome b-c1 complex, complex III, CIII), resulting in different assemblies (supercomplex SCI(1)III(2)IV(1) and megacomplex MCI(2)III(2)IV(2)).

Its subcellular location is the mitochondrion inner membrane. The catalysed reaction is 4 Fe(II)-[cytochrome c] + O2 + 8 H(+)(in) = 4 Fe(III)-[cytochrome c] + 2 H2O + 4 H(+)(out). Component of the cytochrome c oxidase, the last enzyme in the mitochondrial electron transport chain which drives oxidative phosphorylation. The respiratory chain contains 3 multisubunit complexes succinate dehydrogenase (complex II, CII), ubiquinol-cytochrome c oxidoreductase (cytochrome b-c1 complex, complex III, CIII) and cytochrome c oxidase (complex IV, CIV), that cooperate to transfer electrons derived from NADH and succinate to molecular oxygen, creating an electrochemical gradient over the inner membrane that drives transmembrane transport and the ATP synthase. Cytochrome c oxidase is the component of the respiratory chain that catalyzes the reduction of oxygen to water. Electrons originating from reduced cytochrome c in the intermembrane space (IMS) are transferred via the dinuclear copper A center (CU(A)) of subunit 2 and heme A of subunit 1 to the active site in subunit 1, a binuclear center (BNC) formed by heme A3 and copper B (CU(B)). The BNC reduces molecular oxygen to 2 water molecules using 4 electrons from cytochrome c in the IMS and 4 protons from the mitochondrial matrix. The sequence is that of Cytochrome c oxidase subunit 3 (MT-CO3) from Equus asinus (Donkey).